Reading from the N-terminus, the 311-residue chain is Methionyl-tRNA formyltransferase (311 aa).

Residue 109-112 (SLLP) participates in (6S)-5,6,7,8-tetrahydrofolate binding.

This sequence belongs to the Fmt family.

The catalysed reaction is L-methionyl-tRNA(fMet) + (6R)-10-formyltetrahydrofolate = N-formyl-L-methionyl-tRNA(fMet) + (6S)-5,6,7,8-tetrahydrofolate + H(+). Functionally, attaches a formyl group to the free amino group of methionyl-tRNA(fMet). The formyl group appears to play a dual role in the initiator identity of N-formylmethionyl-tRNA by promoting its recognition by IF2 and preventing the misappropriation of this tRNA by the elongation apparatus. The sequence is that of Methionyl-tRNA formyltransferase from Staphylococcus aureus (strain MW2).